The following is a 284-amino-acid chain: Small ribosomal subunit protein uS2 (284 aa).

Residues 250–272 are compositionally biased toward low complexity; that stretch reads QELLAGATASPTAAGAAPGTPEA. The tract at residues 250 to 284 is disordered; the sequence is QELLAGATASPTAAGAAPGTPEADIQTEPTAPQNP.

Belongs to the universal ribosomal protein uS2 family.

This chain is Small ribosomal subunit protein uS2, found in Mycobacterium sp. (strain KMS).